The sequence spans 284 residues: Nucleotide-binding protein Teth39_0666 (284 aa).

An ATP-binding site is contributed by 8-15; the sequence is GLSGAGKT. 58–61 lines the GTP pocket; the sequence is DLRG.

It belongs to the RapZ-like family.

Functionally, displays ATPase and GTPase activities. The polypeptide is Nucleotide-binding protein Teth39_0666 (Thermoanaerobacter pseudethanolicus (strain ATCC 33223 / 39E) (Clostridium thermohydrosulfuricum)).